Here is a 297-residue protein sequence, read N- to C-terminus: Acetylglutamate kinase (297 aa).

Substrate-binding positions include glycine 72–glycine 73, arginine 94, and asparagine 187.

The protein belongs to the acetylglutamate kinase family. ArgB subfamily.

It is found in the cytoplasm. It catalyses the reaction N-acetyl-L-glutamate + ATP = N-acetyl-L-glutamyl 5-phosphate + ADP. The protein operates within amino-acid biosynthesis; L-arginine biosynthesis; N(2)-acetyl-L-ornithine from L-glutamate: step 2/4. In terms of biological role, catalyzes the ATP-dependent phosphorylation of N-acetyl-L-glutamate. The protein is Acetylglutamate kinase of Synechocystis sp. (strain ATCC 27184 / PCC 6803 / Kazusa).